The primary structure comprises 278 residues: DNA repair protein RecO (278 aa).

Residues 1-12 (MGTNDALTSTED) are compositionally biased toward polar residues. Residues 1–42 (MGTNDALTSTEDAVTAGANDAPLPAPPEPPRKARRATSRTSD) are disordered.

It belongs to the RecO family.

Its function is as follows. Involved in DNA repair and RecF pathway recombination. The chain is DNA repair protein RecO from Burkholderia lata (strain ATCC 17760 / DSM 23089 / LMG 22485 / NCIMB 9086 / R18194 / 383).